The sequence spans 463 residues: ATP synthase subunit beta (463 aa).

152–159 (GGAGVGKT) provides a ligand contact to ATP.

The protein belongs to the ATPase alpha/beta chains family. As to quaternary structure, F-type ATPases have 2 components, CF(1) - the catalytic core - and CF(0) - the membrane proton channel. CF(1) has five subunits: alpha(3), beta(3), gamma(1), delta(1), epsilon(1). CF(0) has three main subunits: a(1), b(2) and c(9-12). The alpha and beta chains form an alternating ring which encloses part of the gamma chain. CF(1) is attached to CF(0) by a central stalk formed by the gamma and epsilon chains, while a peripheral stalk is formed by the delta and b chains.

The protein localises to the cell inner membrane. The enzyme catalyses ATP + H2O + 4 H(+)(in) = ADP + phosphate + 5 H(+)(out). Its function is as follows. Produces ATP from ADP in the presence of a proton gradient across the membrane. The catalytic sites are hosted primarily by the beta subunits. In Shewanella putrefaciens (strain CN-32 / ATCC BAA-453), this protein is ATP synthase subunit beta.